A 391-amino-acid polypeptide reads, in one-letter code: Suppressor APC domain-containing protein 2 (391 aa).

Residues 1 to 20 (MAVAAMAERGRLSHAAPAPS) form a disordered region. Thr-218 carries the post-translational modification Phosphothreonine. Positions 226–277 (SLLKQMKELDQEQEVLLQGLEMMARGRDWYQQQLQRVQERQRRLSQSRAAAD) form a coiled coil. Ser-283 bears the Phosphoserine mark. A coiled-coil region spans residues 340 to 381 (LKEQNRLLTQEVTDKSERITQLEQEKSALIKQLFEARALSQQ).

In terms of assembly, interacts with a spindle orientation complex at least composed of GNAI1, GPSM2 and NUMA1. Interacts with GPSM2 (via TPR motifs); this interaction is required to prevent GPSM2 anchoring at the mitotic apical cortex and is inhibited in presence of NUMA1 in a dose dependent manner. Interacts with PARD3. As to expression, expressed in the retina. Expressed in retinal progenitor cells and newly differentiated neurons but not in mature retinal cells (at protein level).

The protein localises to the cytoplasm. It is found in the nucleus. Its subcellular location is the cell cortex. It localises to the apical cell membrane. The protein resides in the cell junction. The protein localises to the tight junction. In terms of biological role, plays a role in planar mitotic spindle orientation in retinal progenitor cells (RPCs) and promotes the production of symmetric terminal divisions. Negatively regulates the mitotic apical cortex localization of GPSM2. Involved also in positive regulation of cell proliferation and tumor cell growth. The protein is Suppressor APC domain-containing protein 2 of Mus musculus (Mouse).